Here is a 360-residue protein sequence, read N- to C-terminus: Chorismate synthase (360 aa).

Residue Arg-46 coordinates NADP(+). FMN is bound by residues 123-125 (RSS), 235-236 (NA), Gly-275, 290-294 (KPTPS), and Arg-316.

It belongs to the chorismate synthase family. In terms of assembly, homotetramer. It depends on FMNH2 as a cofactor.

The enzyme catalyses 5-O-(1-carboxyvinyl)-3-phosphoshikimate = chorismate + phosphate. It participates in metabolic intermediate biosynthesis; chorismate biosynthesis; chorismate from D-erythrose 4-phosphate and phosphoenolpyruvate: step 7/7. In terms of biological role, catalyzes the anti-1,4-elimination of the C-3 phosphate and the C-6 proR hydrogen from 5-enolpyruvylshikimate-3-phosphate (EPSP) to yield chorismate, which is the branch point compound that serves as the starting substrate for the three terminal pathways of aromatic amino acid biosynthesis. This reaction introduces a second double bond into the aromatic ring system. The protein is Chorismate synthase of Wolinella succinogenes (strain ATCC 29543 / DSM 1740 / CCUG 13145 / JCM 31913 / LMG 7466 / NCTC 11488 / FDC 602W) (Vibrio succinogenes).